We begin with the raw amino-acid sequence, 619 residues long: Dihydroxy-acid dehydratase (619 aa).

Aspartate 81 is a binding site for Mg(2+). Cysteine 122 is a [2Fe-2S] cluster binding site. Mg(2+)-binding residues include aspartate 123 and lysine 124. Lysine 124 carries the post-translational modification N6-carboxylysine. Cysteine 195 serves as a coordination point for [2Fe-2S] cluster. Glutamate 491 lines the Mg(2+) pocket. Serine 517 acts as the Proton acceptor in catalysis.

This sequence belongs to the IlvD/Edd family. Homodimer. [2Fe-2S] cluster is required as a cofactor. Requires Mg(2+) as cofactor.

The enzyme catalyses (2R)-2,3-dihydroxy-3-methylbutanoate = 3-methyl-2-oxobutanoate + H2O. The catalysed reaction is (2R,3R)-2,3-dihydroxy-3-methylpentanoate = (S)-3-methyl-2-oxopentanoate + H2O. It participates in amino-acid biosynthesis; L-isoleucine biosynthesis; L-isoleucine from 2-oxobutanoate: step 3/4. Its pathway is amino-acid biosynthesis; L-valine biosynthesis; L-valine from pyruvate: step 3/4. Its function is as follows. Functions in the biosynthesis of branched-chain amino acids. Catalyzes the dehydration of (2R,3R)-2,3-dihydroxy-3-methylpentanoate (2,3-dihydroxy-3-methylvalerate) into 2-oxo-3-methylpentanoate (2-oxo-3-methylvalerate) and of (2R)-2,3-dihydroxy-3-methylbutanoate (2,3-dihydroxyisovalerate) into 2-oxo-3-methylbutanoate (2-oxoisovalerate), the penultimate precursor to L-isoleucine and L-valine, respectively. The polypeptide is Dihydroxy-acid dehydratase (Sphingopyxis alaskensis (strain DSM 13593 / LMG 18877 / RB2256) (Sphingomonas alaskensis)).